Consider the following 590-residue polypeptide: V-type ATP synthase alpha chain (590 aa).

234–241 provides a ligand contact to ATP; it reads GGFGAGKT.

This sequence belongs to the ATPase alpha/beta chains family.

It carries out the reaction ATP + H2O + 4 H(+)(in) = ADP + phosphate + 5 H(+)(out). Its function is as follows. Produces ATP from ADP in the presence of a proton gradient across the membrane. The V-type alpha chain is a catalytic subunit. The chain is V-type ATP synthase alpha chain from Halothermothrix orenii (strain H 168 / OCM 544 / DSM 9562).